The sequence spans 633 residues: Threonine--tRNA ligase (633 aa).

Residues 1 to 61 (MINIHFSNNL…IENCTFEVIT (61 aa)) enclose the TGS domain. The interval 242 to 533 (DHRKIGRELE…LIEHHSGKFP (292 aa)) is catalytic. The Zn(2+) site is built by cysteine 333, histidine 384, and histidine 510.

It belongs to the class-II aminoacyl-tRNA synthetase family. As to quaternary structure, homodimer. The cofactor is Zn(2+).

Its subcellular location is the cytoplasm. The catalysed reaction is tRNA(Thr) + L-threonine + ATP = L-threonyl-tRNA(Thr) + AMP + diphosphate + H(+). Its function is as follows. Catalyzes the attachment of threonine to tRNA(Thr) in a two-step reaction: L-threonine is first activated by ATP to form Thr-AMP and then transferred to the acceptor end of tRNA(Thr). Also edits incorrectly charged L-seryl-tRNA(Thr). This chain is Threonine--tRNA ligase, found in Ehrlichia chaffeensis (strain ATCC CRL-10679 / Arkansas).